Reading from the N-terminus, the 154-residue chain is uncharacterized protein (154 aa).

It localises to the mitochondrion. This is an uncharacterized protein from Arabidopsis thaliana (Mouse-ear cress).